The sequence spans 727 residues: Glycerol-3-phosphate dehydrogenase, mitochondrial (727 aa).

Residues 1 to 42 (MAFQKAVKGTILVGGGALATVLGLSQFAHYRRKQMNLAYVKA) constitute a mitochondrion transit peptide. Residue 71–99 (DILVIGGGATGSGCALDAVTRGLKTALVE) coordinates FAD. Tyr-601 carries the phosphotyrosine modification. EF-hand domains follow at residues 623 to 658 (SDIDRYKKRFHKFDADQKGFITIVDVQRVLESINVQ) and 659 to 694 (MDENTLHEILNEVDLNKNGQVELNEFLQLMSAIQKG). Asp-672, Asn-674, Asn-676, Gln-678, and Glu-683 together coordinate Ca(2+).

This sequence belongs to the FAD-dependent glycerol-3-phosphate dehydrogenase family. FAD serves as cofactor.

The protein resides in the mitochondrion. It carries out the reaction a quinone + sn-glycerol 3-phosphate = dihydroxyacetone phosphate + a quinol. Its pathway is polyol metabolism; glycerol degradation via glycerol kinase pathway; glycerone phosphate from sn-glycerol 3-phosphate (anaerobic route): step 1/1. Its activity is regulated as follows. Calcium-binding enhance the activity of the enzyme. Functionally, calcium-responsive mitochondrial glycerol-3-phosphate dehydrogenase which seems to be a key component of the pancreatic beta-cell glucose-sensing device. The sequence is that of Glycerol-3-phosphate dehydrogenase, mitochondrial from Homo sapiens (Human).